The sequence spans 117 residues: Large ribosomal subunit protein uL22 (117 aa).

This sequence belongs to the universal ribosomal protein uL22 family. Part of the 50S ribosomal subunit.

This protein binds specifically to 23S rRNA; its binding is stimulated by other ribosomal proteins, e.g. L4, L17, and L20. It is important during the early stages of 50S assembly. It makes multiple contacts with different domains of the 23S rRNA in the assembled 50S subunit and ribosome. In terms of biological role, the globular domain of the protein is located near the polypeptide exit tunnel on the outside of the subunit, while an extended beta-hairpin is found that lines the wall of the exit tunnel in the center of the 70S ribosome. This Chlorobium phaeobacteroides (strain BS1) protein is Large ribosomal subunit protein uL22.